A 272-amino-acid chain; its full sequence is Orotidine 5'-phosphate decarboxylase (272 aa).

Catalysis depends on K95, which acts as the Proton donor.

It belongs to the OMP decarboxylase family. Type 2 subfamily.

The enzyme catalyses orotidine 5'-phosphate + H(+) = UMP + CO2. It participates in pyrimidine metabolism; UMP biosynthesis via de novo pathway; UMP from orotate: step 2/2. In Cupriavidus metallidurans (strain ATCC 43123 / DSM 2839 / NBRC 102507 / CH34) (Ralstonia metallidurans), this protein is Orotidine 5'-phosphate decarboxylase.